Reading from the N-terminus, the 102-residue chain is MQNKSKVRDDFIKIVKDVKKDFPELDLKIRVNKEKVTFLNSPLELYHKSVSLILGLLQQIENSLGLFPDSPVLEKLEDNSLKLKKALIMLILSRKDMFSKAE.

This Chlamydia trachomatis serovar L2 (strain ATCC VR-902B / DSM 19102 / 434/Bu) protein is Virulence plasmid protein pGP4-D.